The chain runs to 393 residues: S-adenosylmethionine synthase (393 aa).

H16 provides a ligand contact to ATP. D18 is a binding site for Mg(2+). E44 provides a ligand contact to K(+). L-methionine-binding residues include E57 and Q100. The interval 100–110 (QSNDIAQGVDQ) is flexible loop. Residues 167–169 (DAK), 238–239 (RF), D247, 253–254 (RK), A270, and K274 contribute to the ATP site. Residue D247 coordinates L-methionine. K278 contacts L-methionine.

This sequence belongs to the AdoMet synthase family. As to quaternary structure, homotetramer; dimer of dimers. Mg(2+) serves as cofactor. Requires K(+) as cofactor.

The protein localises to the cytoplasm. It carries out the reaction L-methionine + ATP + H2O = S-adenosyl-L-methionine + phosphate + diphosphate. It functions in the pathway amino-acid biosynthesis; S-adenosyl-L-methionine biosynthesis; S-adenosyl-L-methionine from L-methionine: step 1/1. Its function is as follows. Catalyzes the formation of S-adenosylmethionine (AdoMet) from methionine and ATP. The overall synthetic reaction is composed of two sequential steps, AdoMet formation and the subsequent tripolyphosphate hydrolysis which occurs prior to release of AdoMet from the enzyme. This Methylibium petroleiphilum (strain ATCC BAA-1232 / LMG 22953 / PM1) protein is S-adenosylmethionine synthase.